We begin with the raw amino-acid sequence, 428 residues long: UDP-N-acetylglucosamine 1-carboxyvinyltransferase 2 (428 aa).

Position 22–23 (22–23 (KN)) interacts with phosphoenolpyruvate. Position 92 (Arg92) interacts with UDP-N-acetyl-alpha-D-glucosamine. The active-site Proton donor is Cys116. The residue at position 116 (Cys116) is a 2-(S-cysteinyl)pyruvic acid O-phosphothioketal. Residues 121-125 (RPIDQ), Asp304, and Ile326 contribute to the UDP-N-acetyl-alpha-D-glucosamine site.

The protein belongs to the EPSP synthase family. MurA subfamily.

It localises to the cytoplasm. The catalysed reaction is phosphoenolpyruvate + UDP-N-acetyl-alpha-D-glucosamine = UDP-N-acetyl-3-O-(1-carboxyvinyl)-alpha-D-glucosamine + phosphate. It participates in cell wall biogenesis; peptidoglycan biosynthesis. Cell wall formation. Adds enolpyruvyl to UDP-N-acetylglucosamine. This is UDP-N-acetylglucosamine 1-carboxyvinyltransferase 2 from Geobacillus kaustophilus (strain HTA426).